Here is a 687-residue protein sequence, read N- to C-terminus: Histone deacetylase clr3 (687 aa).

A histone deacetylase region spans residues 55–385 (KKSGLCYDPR…ALAVAQSLLG (331 aa)). His-195 is a catalytic residue.

This sequence belongs to the histone deacetylase family. HD type 2 subfamily. In terms of assembly, interacts with ccq1, clr1, clr2 and mit1.

The protein localises to the nucleus. Its subcellular location is the chromosome. The protein resides in the centromere. It localises to the telomere. It carries out the reaction N(6)-acetyl-L-lysyl-[histone] + H2O = L-lysyl-[histone] + acetate. In terms of biological role, responsible for the deacetylation of lysine residues on the N-terminal part of the core histones (H2A, H2B, H3 and H4). Histone deacetylation gives a tag for epigenetic repression and plays an important role in transcriptional regulation, cell cycle progression and developmental events. Histone deacetylases act via the formation of large multiprotein complexes. Required for proper positioning of nucleosomes at heterochromatic loci and for transcriptional gene silencing (TGS) function of the Snf2/Hdac-containing repressor complex (SHREC). This is Histone deacetylase clr3 (clr3) from Schizosaccharomyces pombe (strain 972 / ATCC 24843) (Fission yeast).